Consider the following 75-residue polypeptide: Sec-independent protein translocase protein TatA (75 aa).

Residues 1-21 (MFGLSPAQLIILLVVILLIFG) traverse the membrane as a helical segment.

The protein belongs to the TatA/E family. In terms of assembly, the Tat system comprises two distinct complexes: a TatABC complex, containing multiple copies of TatA, TatB and TatC subunits, and a separate TatA complex, containing only TatA subunits. Substrates initially bind to the TatABC complex, which probably triggers association of the separate TatA complex to form the active translocon.

It localises to the cell inner membrane. Part of the twin-arginine translocation (Tat) system that transports large folded proteins containing a characteristic twin-arginine motif in their signal peptide across membranes. TatA could form the protein-conducting channel of the Tat system. The sequence is that of Sec-independent protein translocase protein TatA from Haemophilus influenzae (strain PittEE).